The chain runs to 525 residues: Potassium voltage-gated channel subfamily A member 3 (525 aa).

Residues 1 to 23 are disordered; sequence MTVVPGDHLLEPEAAGGGGGDPP. At 1–184 the chain is on the cytoplasmic side; it reads MTVVPGDHLL…EYPESSGPAR (184 aa). Residues 185–203 form a helical membrane-spanning segment; that stretch reads GIAIVSVLVILISIVIFCL. Residues 204–244 are Extracellular-facing; the sequence is ETLPEFRDEKDYPASPSQDVFEAANNSTSGASSGASSFSDP. Asn-229 carries an N-linked (GlcNAc...) asparagine glycan. A helical membrane pass occupies residues 245–266; that stretch reads FFVVETLCIIWFSFELLVRFFA. The S-palmitoyl cysteine moiety is linked to residue Cys-267. Residues 267 to 277 are Cytoplasmic-facing; the sequence is CPSKATFSRNI. Residues 278–298 form a helical membrane-spanning segment; that stretch reads MNLIDIVAIIPYFITLGTELA. The Extracellular segment spans residues 299-312; sequence ERQGNGQQAMSLAI. Residues 313 to 331 form a helical; Voltage-sensor membrane-spanning segment; that stretch reads LRVIRLVRVFRIFKLSRHS. Residues 332-347 are Cytoplasmic-facing; that stretch reads KGLQILGQTLKASMRE. Residues 348 to 367 form a helical membrane-spanning segment; the sequence is LGLLIFFLFIGVILFSSAVY. Residues 368 to 408 are Extracellular-facing; the sequence is FAEADDPSSGFNSIPDAFWWAVVTMTTVGYGDMHPVTIGGK. Residues 394 to 399 carry the Selectivity filter motif; it reads TVGYGD. The chain crosses the membrane as a helical span at residues 409–431; it reads IVGSLCAIAGVLTIALPVPVIVS. At 432–525 the chain is on the cytoplasmic side; that stretch reads NFNYFYHRET…VNIKKIFTDV (94 aa). The interval 432–525 is interaction with KCNE4; sequence NFNYFYHRET…VNIKKIFTDV (94 aa). Tyr-449 bears the Phosphotyrosine mark. At Ser-470 the chain carries Phosphoserine; by PKA. A PDZ-binding motif is present at residues 523-525; that stretch reads TDV.

It belongs to the potassium channel family. A (Shaker) (TC 1.A.1.2) subfamily. Kv1.3/KCNA3 sub-subfamily. As to quaternary structure, homotetramer. Forms heterooligomers with KCNE4 which inhibits KCNA3 activity by impairing localization to the cell membrane. The stoichiometry of KCNA3 and KCNE4 in the heterooligomers are 4:1, 4:2, 4:3 or 4:4 respectively. Increasing the number of KCNE4 subunits steadily slows the activation KCNA3 and decreases its abundance at the cell membrane. However, a single subunit of KCNE4 is sufficient for the cooperative enhancement of the inactivating function of the channel. Interacts with SEC24D; this interaction is reduced in the presence of KCNE4. Interacts with DLG1, DLG2 and DLG4 via their PDZ domains. Post-translationally, phosphorylation on Tyr-449 inhibits its channel activity. In terms of processing, N-glycosylation promotes the cell surface expression.

It localises to the cell membrane. It carries out the reaction K(+)(in) = K(+)(out). Its activity is regulated as follows. Activity is up-regulated by JAK2. Its function is as follows. Mediates the voltage-dependent potassium ion permeability of excitable membranes. Assuming opened or closed conformations in response to the voltage difference across the membrane, the protein forms a potassium-selective channel through which potassium ions may pass in accordance with their electrochemical gradient. This is Potassium voltage-gated channel subfamily A member 3 (Kcna3) from Rattus norvegicus (Rat).